A 49-amino-acid chain; its full sequence is uncharacterized protein (49 aa).

Belongs to the metallo-dependent hydrolases superfamily. TatD-type hydrolase family. A divalent metal cation serves as cofactor.

This is an uncharacterized protein from Geobacillus stearothermophilus (Bacillus stearothermophilus).